The primary structure comprises 211 residues: MRILTVSPDQYERYRSFLKQMHRLRATVFGGRLEWDVSIIAGEERDQYDNFKPSYLLAITDSGRVAGCVRLLPACGPTMLEQTFSQLLEMGSLAAHSGMVESSRFCVDTSLVSRRDASQLHLATLTLFAGIIEWSMASGYTEIVTATDLRFERILKRAGWPMRRLGEPTAIGNTIAIAGRLPADRASFEQVCPPGYYSIPRIDVAAIRSAA.

Belongs to the autoinducer synthase family.

The enzyme catalyses a fatty acyl-[ACP] + S-adenosyl-L-methionine = an N-acyl-L-homoserine lactone + S-methyl-5'-thioadenosine + holo-[ACP] + H(+). In terms of biological role, required for the synthesis of OHHL (N-(3-oxohexanoyl)-L-homoserine lactone), an autoinducer molecule which binds to TraR and thus acts in the control of conjugal transfer. This is Acyl-homoserine-lactone synthase (traI) from Agrobacterium fabrum (strain C58 / ATCC 33970) (Agrobacterium tumefaciens (strain C58)).